A 393-amino-acid chain; its full sequence is MATAALRQIWIPRFLPVPWFLCGSRRYASSSFKAADLQLEMTQEPHKKPDPSQPLLFGKTFTDHMLMVEWNQEKGWGQPRIQPFQNLTLHPACSALHYSLQLFEGMKAFKGGDQRVRLFRPWLNMERMLRSALRLCLPSFDKIELLECIRRLVEVDQDWVPGSMGTSLYVRPVLIGNEPSLGVGHPTRALLFVILSPVGAYFPGDALKPVSLLADPSFIRAWVGGVGNYKLGGNYGPTVLVQQEAQKKGCEQVLWLYGPDHELTEVGTMNIFVFWTYEDGVLELVTPPLDGIILPGIVRQSLLDLARTWGEFRVVERKITMKEFLRALKDGRVREVFGSGTACQVCPVHQILYQGKHFHIPTMENGPQLILRFHKELKAIQYGSKAHEWMLPV.

Residues Met-1–Tyr-27 constitute a mitochondrion transit peptide. Residue Tyr-169 coordinates substrate. Lys-230 bears the N6-(pyridoxal phosphate)lysine mark. N6-acetyllysine is present on Lys-322.

This sequence belongs to the class-IV pyridoxal-phosphate-dependent aminotransferase family. In terms of assembly, homodimer. It depends on pyridoxal 5'-phosphate as a cofactor.

It localises to the mitochondrion. The catalysed reaction is L-leucine + 2-oxoglutarate = 4-methyl-2-oxopentanoate + L-glutamate. It catalyses the reaction L-isoleucine + 2-oxoglutarate = (S)-3-methyl-2-oxopentanoate + L-glutamate. The enzyme catalyses L-valine + 2-oxoglutarate = 3-methyl-2-oxobutanoate + L-glutamate. Functionally, catalyzes the first reaction in the catabolism of the essential branched chain amino acids leucine, isoleucine, and valine. May also function as a transporter of branched chain alpha-keto acids. This Bos taurus (Bovine) protein is Branched-chain-amino-acid aminotransferase, mitochondrial (BCAT2).